Consider the following 417-residue polypeptide: Serine hydroxymethyltransferase (417 aa).

(6S)-5,6,7,8-tetrahydrofolate is bound by residues leucine 121 and glycine 125–leucine 127. Lysine 229 bears the N6-(pyridoxal phosphate)lysine mark. Serine 355–phenylalanine 357 is a (6S)-5,6,7,8-tetrahydrofolate binding site.

This sequence belongs to the SHMT family. As to quaternary structure, homodimer. The cofactor is pyridoxal 5'-phosphate.

The protein resides in the cytoplasm. It carries out the reaction (6R)-5,10-methylene-5,6,7,8-tetrahydrofolate + glycine + H2O = (6S)-5,6,7,8-tetrahydrofolate + L-serine. Its pathway is one-carbon metabolism; tetrahydrofolate interconversion. It functions in the pathway amino-acid biosynthesis; glycine biosynthesis; glycine from L-serine: step 1/1. In terms of biological role, catalyzes the reversible interconversion of serine and glycine with tetrahydrofolate (THF) serving as the one-carbon carrier. This reaction serves as the major source of one-carbon groups required for the biosynthesis of purines, thymidylate, methionine, and other important biomolecules. Also exhibits THF-independent aldolase activity toward beta-hydroxyamino acids, producing glycine and aldehydes, via a retro-aldol mechanism. The polypeptide is Serine hydroxymethyltransferase (Shewanella baltica (strain OS195)).